The chain runs to 175 residues: MTIKLNELRDNNGARKGRMRVGRGIGSGKGKTAGRGQKGQKARSGVAINGFEGGQMPLHMRIPKRGFNNIFGKDFAIVNLGMVQKLIDAKKLDAKATIDHAALKAAGVARGGKDGVRLLAKGELTAKVTFAVAGASKGAIEAVEKAGGKVELPEARPEGDGKKATRKAEAAAKNA.

Residues 1-13 (MTIKLNELRDNNG) are compositionally biased toward basic and acidic residues. Disordered regions lie at residues 1 to 44 (MTIK…KARS) and 150 to 175 (VELP…AKNA). Residues 23-37 (RGIGSGKGKTAGRGQ) show a composition bias toward gly residues.

The protein belongs to the universal ribosomal protein uL15 family. As to quaternary structure, part of the 50S ribosomal subunit.

In terms of biological role, binds to the 23S rRNA. The polypeptide is Large ribosomal subunit protein uL15 (Sphingopyxis alaskensis (strain DSM 13593 / LMG 18877 / RB2256) (Sphingomonas alaskensis)).